We begin with the raw amino-acid sequence, 207 residues long: Sodium/potassium-transporting ATPase subunit beta-1-interacting protein 1 (207 aa).

3 consecutive transmembrane segments (helical) span residues 2–22, 35–55, and 62–82; these read GRCDGRCTLVVICCLQLVAAL, APILANFLHIMAVILGVFGTV, and LILYAVWLVVWVGWNSFIICF. The N-linked (GlcNAc...) asparagine glycan is linked to asparagine 100. The chain crosses the membrane as a helical span at residues 147 to 167; it reads VVSSALQVFLALFGFVYACYV.

This sequence belongs to the NKAIN family. In terms of assembly, interacts with atp1b1 C-terminus.

It is found in the cell membrane. This Danio rerio (Zebrafish) protein is Sodium/potassium-transporting ATPase subunit beta-1-interacting protein 1 (nkain1).